The sequence spans 280 residues: Tobamovirus multiplication protein 2A (280 aa).

At Met1 to Leu13 the chain is on the cytoplasmic side. The chain crosses the membrane as a helical span at residues Leu14–Val34. At Glu35–Lys78 the chain is on the extracellular side. The chain crosses the membrane as a helical span at residues Ala79–Gly99. The Cytoplasmic segment spans residues Cys100–Cys113. Residues Tyr114–Phe134 form a helical membrane-spanning segment. The Extracellular portion of the chain corresponds to Asp135–Lys162. A helical transmembrane segment spans residues Ile163–Leu183. The Cytoplasmic portion of the chain corresponds to Met184 to Met280. Residues Ser196 and Ser233 each carry the phosphoserine modification. A disordered region spans residues Ser258–Met280. The segment covering Asn271–Met280 has biased composition (basic and acidic residues).

Belongs to the tetraspanin (TM4SF) family. Homodimer. Constituent of tobamovirus replication complex. Interacts with TOM1. As to expression, expressed in rosette leaves.

The protein localises to the vacuole membrane. Functionally, necessary for the efficient intracellular multiplication of tobamoviruses, being a component of the replication complex. The protein is Tobamovirus multiplication protein 2A (TOM2A) of Arabidopsis thaliana (Mouse-ear cress).